We begin with the raw amino-acid sequence, 165 residues long: Phosphopantetheine adenylyltransferase (165 aa).

Residue Thr-11 participates in substrate binding. ATP contacts are provided by residues 11 to 12 and His-19; that span reads TF. Lys-43, Val-75, and Arg-89 together coordinate substrate. ATP contacts are provided by residues 90–92, Glu-100, and 125–131; these read GLR and YQFISST.

It belongs to the bacterial CoaD family. As to quaternary structure, homohexamer. Requires Mg(2+) as cofactor.

Its subcellular location is the cytoplasm. It catalyses the reaction (R)-4'-phosphopantetheine + ATP + H(+) = 3'-dephospho-CoA + diphosphate. It participates in cofactor biosynthesis; coenzyme A biosynthesis; CoA from (R)-pantothenate: step 4/5. Functionally, reversibly transfers an adenylyl group from ATP to 4'-phosphopantetheine, yielding dephospho-CoA (dPCoA) and pyrophosphate. In Acidovorax ebreus (strain TPSY) (Diaphorobacter sp. (strain TPSY)), this protein is Phosphopantetheine adenylyltransferase.